The following is a 101-amino-acid chain: uncharacterized protein (101 aa).

The span at 1–12 (MAAFQHRAKRSK) shows a compositional bias: basic residues. 2 disordered regions span residues 1 to 30 (MAAFQHRAKRSKNGASAKQGKISKADKKRA) and 65 to 87 (AQDQRSDAQAQQQRAQERSNVDK). Residues 65–78 (AQDQRSDAQAQQQR) show a composition bias toward low complexity.

This is an uncharacterized protein from Eremothecium gossypii (strain ATCC 10895 / CBS 109.51 / FGSC 9923 / NRRL Y-1056) (Yeast).